Reading from the N-terminus, the 437-residue chain is Nuclear envelope integral membrane protein 1 (437 aa).

Positions 1–44 (MAGGIKVSVWSAVGPGPRCWGAGGGGGATWLLLVVAGCVVCGSA) are cleaved as a signal peptide. N-linked (GlcNAc...) asparagine glycosylation is present at Asn-123. Transmembrane regions (helical) follow at residues 159-179 (PKLF…DLLS), 183-203 (IFYY…IVIF), 214-234 (PIYV…QLVF), 244-264 (YWHY…AVCY), and 288-308 (GLMY…VIAL). Positions 184-295 (FYYSTGMSVG…GLGLMYSSIQ (112 aa)) are a; required for its colocalization with lamins at the nuclear envelope. Residues 334–403 (PVPPRLLTEE…LTPNEVSVHE (70 aa)) are b; required for interaction with RAN-GTP. Positions 334–437 (PVPPRLLTEE…PTFTQNNFLT (104 aa)) are required for nuclear localization. Phosphoserine is present on residues Ser-366, Ser-419, and Ser-420. A compositionally biased stretch (acidic residues) spans 415 to 425 (DEELSSEEEGS). The segment at 415–437 (DEELSSEEEGSEYPTFTQNNFLT) is disordered. The span at 428–437 (PTFTQNNFLT) shows a compositional bias: polar residues.

Belongs to the NEMP family. In terms of assembly, homooligomer. Interacts with RAN-GTP. Interacts with EMD. In terms of processing, phosphorylated. Phosphorylation may regulate its interaction with RAN-GTP. As to expression, in the ovary, expression is strongest in primordial follicle oocytes and rapidly declines as oocytes mature and move from the cortex (at protein level).

It is found in the nucleus inner membrane. The protein localises to the nucleus envelope. In terms of biological role, together with EMD, contributes to nuclear envelope stiffness in germ cells. Required for female fertility. Essential for normal erythropoiesis. Required for efficient nuclear envelope opening and enucleation during the late stages of erythroblast maturation. The sequence is that of Nuclear envelope integral membrane protein 1 (Nemp1) from Mus musculus (Mouse).